The chain runs to 232 residues: Small ribosomal subunit protein uS2 (232 aa).

The protein belongs to the universal ribosomal protein uS2 family.

The sequence is that of Small ribosomal subunit protein uS2 from Desulforamulus reducens (strain ATCC BAA-1160 / DSM 100696 / MI-1) (Desulfotomaculum reducens).